Reading from the N-terminus, the 463-residue chain is Asparagine--tRNA ligase (463 aa).

This sequence belongs to the class-II aminoacyl-tRNA synthetase family. As to quaternary structure, homodimer.

The protein resides in the cytoplasm. The enzyme catalyses tRNA(Asn) + L-asparagine + ATP = L-asparaginyl-tRNA(Asn) + AMP + diphosphate + H(+). The polypeptide is Asparagine--tRNA ligase (Clostridium botulinum (strain Langeland / NCTC 10281 / Type F)).